A 549-amino-acid polypeptide reads, in one-letter code: Rhodopsin kinase grk7a (549 aa).

Serine 33 is modified (phosphoserine). The RGS domain occupies 53–171 (FESLCEKQPI…QASPFFDKFL (119 aa)). Residues 186 to 449 (FYEFRTLGKG…NDDPRKHEWF (264 aa)) form the Protein kinase domain. ATP contacts are provided by residues 192-200 (LGKGGFGEV) and lysine 215. Aspartate 311 functions as the Proton acceptor in the catalytic mechanism. Residues 450–515 (KSINFARLEA…GAVSIAWQQE (66 aa)) form the AGC-kinase C-terminal domain. A disordered region spans residues 522-549 (FDELSDPNRKESSGGSDDDKKSGTCTLL). Basic and acidic residues predominate over residues 527–543 (DPNRKESSGGSDDDKKS). Cysteine 546 is subject to Cysteine methyl ester. Residue cysteine 546 is the site of S-geranylgeranyl cysteine attachment. The propeptide at 547–549 (TLL) is removed in mature form.

This sequence belongs to the protein kinase superfamily. AGC Ser/Thr protein kinase family. GPRK subfamily. Post-translationally, phosphorylation at Ser-33 is regulated by light and activated by cAMP.

It is found in the membrane. It carries out the reaction L-threonyl-[rhodopsin] + ATP = O-phospho-L-threonyl-[rhodopsin] + ADP + H(+). The enzyme catalyses L-seryl-[rhodopsin] + ATP = O-phospho-L-seryl-[rhodopsin] + ADP + H(+). Functionally, retina-specific kinase involved in the shutoff of the photoresponse and adaptation to changing light conditions via cone opsin phosphorylation, including rhodopsin (RHO). The polypeptide is Rhodopsin kinase grk7a (grk7a) (Danio rerio (Zebrafish)).